A 421-amino-acid polypeptide reads, in one-letter code: Histidine--tRNA ligase (421 aa).

This sequence belongs to the class-II aminoacyl-tRNA synthetase family. As to quaternary structure, homodimer.

The protein localises to the cytoplasm. It catalyses the reaction tRNA(His) + L-histidine + ATP = L-histidyl-tRNA(His) + AMP + diphosphate + H(+). This Francisella tularensis subsp. holarctica (strain LVS) protein is Histidine--tRNA ligase.